The following is a 366-amino-acid chain: tRNA-specific 2-thiouridylase MnmA (366 aa).

ATP-binding positions include 6–13 and methionine 32; that span reads GLSGGVDS. Residue cysteine 96 is the Nucleophile of the active site. Cysteine 96 and cysteine 196 are disulfide-bonded. Residue glycine 120 participates in ATP binding. An interaction with tRNA region spans residues 146–148; that stretch reads KDQ. The active-site Cysteine persulfide intermediate is the cysteine 196. An interaction with tRNA region spans residues 302-303; that stretch reads RY.

The protein belongs to the MnmA/TRMU family.

The protein resides in the cytoplasm. The catalysed reaction is S-sulfanyl-L-cysteinyl-[protein] + uridine(34) in tRNA + AH2 + ATP = 2-thiouridine(34) in tRNA + L-cysteinyl-[protein] + A + AMP + diphosphate + H(+). In terms of biological role, catalyzes the 2-thiolation of uridine at the wobble position (U34) of tRNA, leading to the formation of s(2)U34. The chain is tRNA-specific 2-thiouridylase MnmA from Treponema denticola (strain ATCC 35405 / DSM 14222 / CIP 103919 / JCM 8153 / KCTC 15104).